A 398-amino-acid polypeptide reads, in one-letter code: tRNA(Ile)-lysidine synthase (398 aa).

17–22 (SGGPDS) provides a ligand contact to ATP.

The protein belongs to the tRNA(Ile)-lysidine synthase family.

The protein localises to the cytoplasm. It carries out the reaction cytidine(34) in tRNA(Ile2) + L-lysine + ATP = lysidine(34) in tRNA(Ile2) + AMP + diphosphate + H(+). Ligates lysine onto the cytidine present at position 34 of the AUA codon-specific tRNA(Ile) that contains the anticodon CAU, in an ATP-dependent manner. Cytidine is converted to lysidine, thus changing the amino acid specificity of the tRNA from methionine to isoleucine. The protein is tRNA(Ile)-lysidine synthase of Mesoplasma florum (strain ATCC 33453 / NBRC 100688 / NCTC 11704 / L1) (Acholeplasma florum).